Here is a 259-residue protein sequence, read N- to C-terminus: Deoxyribose-phosphate aldolase (259 aa).

D102 acts as the Proton donor/acceptor in catalysis. Residue K167 is the Schiff-base intermediate with acetaldehyde of the active site. Catalysis depends on K201, which acts as the Proton donor/acceptor.

The protein belongs to the DeoC/FbaB aldolase family. DeoC type 2 subfamily.

The protein resides in the cytoplasm. It carries out the reaction 2-deoxy-D-ribose 5-phosphate = D-glyceraldehyde 3-phosphate + acetaldehyde. It functions in the pathway carbohydrate degradation; 2-deoxy-D-ribose 1-phosphate degradation; D-glyceraldehyde 3-phosphate and acetaldehyde from 2-deoxy-alpha-D-ribose 1-phosphate: step 2/2. In terms of biological role, catalyzes a reversible aldol reaction between acetaldehyde and D-glyceraldehyde 3-phosphate to generate 2-deoxy-D-ribose 5-phosphate. The polypeptide is Deoxyribose-phosphate aldolase (Salmonella dublin (strain CT_02021853)).